The sequence spans 121 residues: Apoptin (121 aa).

Disordered regions lie at residues 1–28 and 57–121; these read MNALQEDTPPGPSTVFRPPTSSRPLETP and LRSA…CIRL. A compositionally biased stretch (polar residues) spans 58 to 70; the sequence is RSATADNSESTGF. Basic and acidic residues predominate over residues 88–102; it reads RSCDPSEYRVSELKE.

This sequence belongs to the gyrovirus apoptin family.

It localises to the host nucleus. Its function is as follows. May act as transcriptional regulator. Induces apoptosis in infected cells. Element of infectious replication cycle. The chain is Apoptin (VP3) from Gallus gallus (Chicken).